We begin with the raw amino-acid sequence, 287 residues long: Mitochondrial glycine transporter A (287 aa).

Solcar repeat units lie at residues His7–Arg97, Pro104–Leu188, and Tyr198–Gln282. Helical transmembrane passes span Phe13–Gln38, Gly72–Tyr98, Val110–Glu135, Gly163–Lys186, Ala202–Ile228, and Gly257–Val275.

Belongs to the mitochondrial carrier (TC 2.A.29) family. SLC25A38 subfamily. As to expression, at 24 hours post-fertilization, expressed predominantly in posterior blood island, posterior cardinal vein and circulating blood, as well as in somites, brain and retina. At 34 hours post-fertilization, becomes restricted to posterior blood island and circulating blood.

The protein localises to the mitochondrion inner membrane. The catalysed reaction is glycine(in) = glycine(out). In terms of biological role, mitochondrial glycine transporter that imports glycine into the mitochondrial matrix. Plays an important role in providing glycine for the first enzymatic step in heme biosynthesis, the condensation of glycine with succinyl-CoA to produce 5-aminolevulinate (ALA) in the mitochondrial matrix. Required during erythropoiesis. May play a role as pro-apoptotic protein that induces caspase-dependent apoptosis. This is Mitochondrial glycine transporter A (slc25a38a) from Danio rerio (Zebrafish).